The sequence spans 729 residues: DNA topoisomerase 3 (729 aa).

In terms of domain architecture, Toprim spans 3 to 136 (KSVVIAEKPS…IKRLWISSVT (134 aa)). The Mg(2+) site is built by Glu-9 and Asp-105. In terms of domain architecture, Topo IA-type catalytic spans 153–594 (YDNLYASAVA…EMKNYTKEIV (442 aa)). Residues 187-192 (NCGRVQ) form an interaction with DNA region. Tyr-310 (O-(5'-phospho-DNA)-tyrosine intermediate) is an active-site residue. The segment covering 686–713 (ERRKKESGNKADKRDVQKYMKQQNKEEE) has biased composition (basic and acidic residues). The tract at residues 686 to 719 (ERRKKESGNKADKRDVQKYMKQQNKEEEPLNNPF) is disordered.

This sequence belongs to the type IA topoisomerase family. Mg(2+) serves as cofactor.

It catalyses the reaction ATP-independent breakage of single-stranded DNA, followed by passage and rejoining.. Releases the supercoiling and torsional tension of DNA, which is introduced during the DNA replication and transcription, by transiently cleaving and rejoining one strand of the DNA duplex. Introduces a single-strand break via transesterification at a target site in duplex DNA. The scissile phosphodiester is attacked by the catalytic tyrosine of the enzyme, resulting in the formation of a DNA-(5'-phosphotyrosyl)-enzyme intermediate and the expulsion of a 3'-OH DNA strand. The free DNA strand then undergoes passage around the unbroken strand, thus removing DNA supercoils. Finally, in the religation step, the DNA 3'-OH attacks the covalent intermediate to expel the active-site tyrosine and restore the DNA phosphodiester backbone. This is DNA topoisomerase 3 from Bacillus cereus (strain ATCC 14579 / DSM 31 / CCUG 7414 / JCM 2152 / NBRC 15305 / NCIMB 9373 / NCTC 2599 / NRRL B-3711).